The following is a 303-amino-acid chain: D-alanine--D-alanine ligase (303 aa).

Residues 99-293 (TYRFLKDIVE…FEELVEIILK (195 aa)) form the ATP-grasp domain. 125 to 176 (GYPCVVKPRREGSSIGVFICESDEEFQHALKEDLPRYGSVIVQKYIPGREMT) contacts ATP. 3 residues coordinate Mg(2+): Asp-248, Glu-260, and Asn-262.

Belongs to the D-alanine--D-alanine ligase family. Mg(2+) serves as cofactor. The cofactor is Mn(2+).

Its subcellular location is the cytoplasm. It carries out the reaction 2 D-alanine + ATP = D-alanyl-D-alanine + ADP + phosphate + H(+). It participates in cell wall biogenesis; peptidoglycan biosynthesis. Its function is as follows. Cell wall formation. The sequence is that of D-alanine--D-alanine ligase from Thermotoga petrophila (strain ATCC BAA-488 / DSM 13995 / JCM 10881 / RKU-1).